The sequence spans 449 residues: GPI mannosyltransferase 2 (449 aa).

The Cytoplasmic portion of the chain corresponds to 1 to 7 (MTEKVTK). A helical membrane pass occupies residues 8–28 (LALASRLIVLLVQLVANGALP). Residues 29-82 (EHKPDVFRMPVSSDQNASWIDKVIKRCLGGLRHWDGEYFLHIAENLYSYENTLA) lie on the Lumenal side of the membrane. The N-linked (GlcNAc...) asparagine glycan is linked to asparagine 44. Residues 83–103 (FYPLYPVVVRHVGQAVEAIGI) form a helical membrane-spanning segment. At 104–109 (SLSQES) the chain is on the cytoplasmic side. The chain crosses the membrane as a helical span at residues 110–130 (ILLVVAVALNFWLFCESANLL). Residues 131–148 (FQLTQVLFNDLNKSWNAA) lie on the Lumenal side of the membrane. Asparagine 142 carries N-linked (GlcNAc...) asparagine glycosylation. A helical membrane pass occupies residues 149 to 169 (LIYCFNPATIFFTAAYSETFF). At 170–196 (AYSSLHLMLECSKPTGSFRYLRLGTAL) the chain is on the cytoplasmic side. A helical membrane pass occupies residues 197–217 (AACLLCRSNGLITLGYPLYFF). Residues 218–235 (GRQLLLKNKEPNTCMQLT) lie on the Lumenal side of the membrane. A helical membrane pass occupies residues 236–256 (QMTLTILGAIGILHTYYFYIY). The Cytoplasmic segment spans residues 257-368 (RLYCLPNTRP…GFKELIRDHT (112 aa)). A helical transmembrane segment spans residues 369 to 389 (TFPFVLHAAILTLVCTVYVHI). Over 390-423 (QVSTRLLASATPVFYWFAADHMPKTLAQLKLRSK) the chain is Lumenal. The chain crosses the membrane as a helical span at residues 424–444 (AGALFVWCTTYSLVGTVLFSN). Residues 445–449 (NYPWT) are Cytoplasmic-facing.

It belongs to the PIGV family.

The protein localises to the endoplasmic reticulum membrane. It functions in the pathway glycolipid biosynthesis; glycosylphosphatidylinositol-anchor biosynthesis. Functionally, mannosyltransferase involved in glycosylphosphatidylinositol-anchor biosynthesis. Transfers the second mannose to the glycosylphosphatidylinositol during GPI precursor assembly. Required for the GPI-mediated endoplasmic reticulum exit and proper targeting to the cell surface of chp. Required for GPI-mediated membrane attachment of chp, qsm and Cont. Essential for microvillar stability in the rhabdomere. The polypeptide is GPI mannosyltransferase 2 (Drosophila melanogaster (Fruit fly)).